Here is a 369-residue protein sequence, read N- to C-terminus: Aminomethyltransferase (369 aa).

This sequence belongs to the GcvT family. In terms of assembly, the glycine cleavage system is composed of four proteins: P, T, L and H.

It carries out the reaction N(6)-[(R)-S(8)-aminomethyldihydrolipoyl]-L-lysyl-[protein] + (6S)-5,6,7,8-tetrahydrofolate = N(6)-[(R)-dihydrolipoyl]-L-lysyl-[protein] + (6R)-5,10-methylene-5,6,7,8-tetrahydrofolate + NH4(+). In terms of biological role, the glycine cleavage system catalyzes the degradation of glycine. The sequence is that of Aminomethyltransferase from Xanthomonas oryzae pv. oryzae (strain PXO99A).